The chain runs to 123 residues: UPF0102 protein DR_2282 (123 aa).

Belongs to the UPF0102 family.

The sequence is that of UPF0102 protein DR_2282 from Deinococcus radiodurans (strain ATCC 13939 / DSM 20539 / JCM 16871 / CCUG 27074 / LMG 4051 / NBRC 15346 / NCIMB 9279 / VKM B-1422 / R1).